A 272-amino-acid polypeptide reads, in one-letter code: Prohibitin 1 (272 aa).

A2 is modified (N-acetylalanine). A Phosphothreonine modification is found at T91. K128 and K186 each carry N6-acetyllysine. Positions 177–211 (KEFTEAVEAKQVAQQEAERARFVVEKAEQQKKAAI) form a coiled coil. K202 carries the N6-acetyllysine; alternate modification. K202 carries the N6-succinyllysine; alternate modification. Y249 is modified (phosphotyrosine).

The protein belongs to the prohibitin family. As to quaternary structure, the mitochondrial prohibitin complex consists of two subunits (PHB1 and PHB2), assembled into a membrane-associated ring-shaped supercomplex of approximately 1 mDa. Interacts with STOML2. Interacts with MAP1LC3B (membrane-bound form LC3-II); the interaction requires PHB2 and takes place upon Parkin-mediated mitochondrial damage. Interacts with STAT3 (unphosphorylated or phosphorylated at 'Ser-727'). Interacts with CLPB. Interacts with CD86 (via cytoplasmic domain); the interactions increases after priming with CD40.

Its subcellular location is the mitochondrion inner membrane. The protein resides in the nucleus. The protein localises to the cytoplasm. It is found in the cell membrane. In terms of biological role, protein with pleiotropic attributes mediated in a cell-compartment- and tissue-specific manner, which include the plasma membrane-associated cell signaling functions, mitochondrial chaperone, and transcriptional co-regulator of transcription factors in the nucleus. Plays a role in adipose tissue and glucose homeostasis in a sex-specific manner. Contributes to pulmonary vascular remodeling by accelerating proliferation of pulmonary arterial smooth muscle cells. Its function is as follows. In the mitochondria, together with PHB2, forms large ring complexes (prohibitin complexes) in the inner mitochondrial membrane (IMM) and functions as a chaperone protein that stabilizes mitochondrial respiratory enzymes and maintains mitochondrial integrity in the IMM, which is required for mitochondrial morphogenesis, neuronal survival, and normal lifespan. The prohibitin complex, with DNAJC19, regulates cardiolipin remodeling and the protein turnover of OMA1 in a cardiolipin-binding manner. Regulates mitochondrial respiration activity playing a role in cellular aging. The prohibitin complex plays a role of mitophagy receptor involved in targeting mitochondria for autophagic degradation. Involved in mitochondrial-mediated antiviral innate immunity, activates RIG-I-mediated signal transduction and production of IFNB1 and proinflammatory cytokine IL6. Functionally, in the nucleus, acts as a transcription coregulator, enhances promoter binding by TP53, a transcription factor it activates, but reduces the promoter binding by E2F1, a transcription factor it represses. Interacts with STAT3 to affect IL17 secretion in T-helper Th17 cells. In the plasma membrane, cooperates with CD86 to mediate CD86-signaling in B lymphocytes that regulates the level of IgG1 produced through the activation of distal signaling intermediates. Upon CD40 engagement, required to activate NF-kappa-B signaling pathway via phospholipase C and protein kinase C activation. This chain is Prohibitin 1 (PHB1), found in Bos taurus (Bovine).